The chain runs to 572 residues: Butyrate--CoA ligase AAE11, peroxisomal (572 aa).

A Microbody targeting signal motif is present at residues 570–572; sequence SRL.

This sequence belongs to the ATP-dependent AMP-binding enzyme family. Expressed in flowers.

The protein resides in the peroxisome. It catalyses the reaction a medium-chain fatty acid + ATP + CoA = a medium-chain fatty acyl-CoA + AMP + diphosphate. Its function is as follows. Butyrate--CoA ligase that is active in vitro with medium-chain fatty acids, with a preference for hexanoate and octanoate. This chain is Butyrate--CoA ligase AAE11, peroxisomal (AAE11), found in Arabidopsis thaliana (Mouse-ear cress).